Here is a 314-residue protein sequence, read N- to C-terminus: MHIKLANPRGFCAGVDRAIEIVNRALEVFGPPIYVRHEVVHNKFVVEDLRARGAVFVEELDQVPDDVIVIFSAHGVSKAVRDEAARRGLKVFDATCPLVTKVHMEVVRYSREGRECILIGHEGHPEVEGTMGQYDASNGGAIYLVEDEADVAELQVRNPDNLAFVTQTTLSMDDTSKVIDALRSKFPAIGGPRKDDICYATQNRQDAVKQLASECDVLLVVGSPNSSNSNRLRELAERMGTPAYLIDGAEDLKHEWFEGVKGIGITAGASAPEVLVRGVVEQLRAWGAAGETELDGRPENITFSMPKELRVKAL.

Cys-12 is a [4Fe-4S] cluster binding site. His-41 and His-74 together coordinate (2E)-4-hydroxy-3-methylbut-2-enyl diphosphate. The dimethylallyl diphosphate site is built by His-41 and His-74. 2 residues coordinate isopentenyl diphosphate: His-41 and His-74. Cys-96 serves as a coordination point for [4Fe-4S] cluster. His-124 lines the (2E)-4-hydroxy-3-methylbut-2-enyl diphosphate pocket. Residue His-124 participates in dimethylallyl diphosphate binding. His-124 contacts isopentenyl diphosphate. Catalysis depends on Glu-126, which acts as the Proton donor. Position 168 (Thr-168) interacts with (2E)-4-hydroxy-3-methylbut-2-enyl diphosphate. A [4Fe-4S] cluster-binding site is contributed by Cys-198. Ser-226, Ser-227, Asn-228, and Ser-270 together coordinate (2E)-4-hydroxy-3-methylbut-2-enyl diphosphate. Positions 226, 227, 228, and 270 each coordinate dimethylallyl diphosphate. Isopentenyl diphosphate contacts are provided by Ser-226, Ser-227, Asn-228, and Ser-270.

It belongs to the IspH family. It depends on [4Fe-4S] cluster as a cofactor.

It carries out the reaction isopentenyl diphosphate + 2 oxidized [2Fe-2S]-[ferredoxin] + H2O = (2E)-4-hydroxy-3-methylbut-2-enyl diphosphate + 2 reduced [2Fe-2S]-[ferredoxin] + 2 H(+). It catalyses the reaction dimethylallyl diphosphate + 2 oxidized [2Fe-2S]-[ferredoxin] + H2O = (2E)-4-hydroxy-3-methylbut-2-enyl diphosphate + 2 reduced [2Fe-2S]-[ferredoxin] + 2 H(+). It participates in isoprenoid biosynthesis; dimethylallyl diphosphate biosynthesis; dimethylallyl diphosphate from (2E)-4-hydroxy-3-methylbutenyl diphosphate: step 1/1. It functions in the pathway isoprenoid biosynthesis; isopentenyl diphosphate biosynthesis via DXP pathway; isopentenyl diphosphate from 1-deoxy-D-xylulose 5-phosphate: step 6/6. Catalyzes the conversion of 1-hydroxy-2-methyl-2-(E)-butenyl 4-diphosphate (HMBPP) into a mixture of isopentenyl diphosphate (IPP) and dimethylallyl diphosphate (DMAPP). Acts in the terminal step of the DOXP/MEP pathway for isoprenoid precursor biosynthesis. This chain is 4-hydroxy-3-methylbut-2-enyl diphosphate reductase, found in Ectopseudomonas mendocina (strain ymp) (Pseudomonas mendocina).